Here is a 196-residue protein sequence, read N- to C-terminus: Probable calcium-binding protein CML32 (196 aa).

EF-hand domains are found at residues L30–V65, D121–P156, and G159–W194. Residues D43, N45, D47, E49, E54, D134, D136, D138, E145, D172, N174, D176, R178, and E183 each coordinate Ca(2+).

Potential calcium sensor. This chain is Probable calcium-binding protein CML32 (CML32), found in Oryza sativa subsp. japonica (Rice).